The chain runs to 103 residues: Small ribosomal subunit protein uS10 (103 aa).

The protein belongs to the universal ribosomal protein uS10 family. As to quaternary structure, part of the 30S ribosomal subunit.

Involved in the binding of tRNA to the ribosomes. The protein is Small ribosomal subunit protein uS10 of Campylobacter fetus subsp. fetus (strain 82-40).